The sequence spans 545 residues: E3 ubiquitin-protein ligase ipaH9.8 (545 aa).

The tract at residues 1–242 (MLPINNNFSL…YHGPRIYFSM (242 aa)) is interaction with target proteins. LRR repeat units lie at residues 57–77 (NSDE…NLPA), 78–99 (QITL…PVTL), 100–117 (KKLY…VLPP), 118–139 (ALES…PDSL), 140–157 (LTMN…SLPQ), 158–179 (ALKN…SEGN), 182–203 (VVRE…ILNL), and 205–228 (NECS…QRLT). The linker stretch occupies residues 243–250 (SDGQQNTL). The tract at residues 251–545 (HRPLADAVTA…SENGSQLHHS (295 aa)) is E3 ubiquitin-protein ligase catalytic domain. Residues 253-545 (PLADAVTAWF…SENGSQLHHS (293 aa)) enclose the NEL domain. C337 (glycyl thioester intermediate) is an active-site residue.

It belongs to the LRR-containing bacterial E3 ligase family. In terms of assembly, also interacts with human and mouse U2AF1 (U2AF35). Ubiquitinated in the presence of host E1 ubiquitin-activating enzyme, E2 ubiquitin-conjugating enzyme and ubiquitin.

The protein localises to the secreted. Its subcellular location is the host cytoplasm. The protein resides in the host nucleus. The enzyme catalyses S-ubiquitinyl-[E2 ubiquitin-conjugating enzyme]-L-cysteine + [acceptor protein]-L-lysine = [E2 ubiquitin-conjugating enzyme]-L-cysteine + N(6)-ubiquitinyl-[acceptor protein]-L-lysine.. With respect to regulation, exists in an autoinhibited state in the absence of substrate protein, due to interactions of the leucine-rich repeats with NEL domain. Is activated upon binding to a substrate protein. Effector E3 ubiquitin ligase that interferes with host's ubiquitination pathway and modulates the acute inflammatory responses, thus facilitating bacterial colonization within the host cell. Interacts with IKBKG (NEMO) and TNIP1 (ABIN-1), a ubiquitin-binding adapter protein, which results in TNIP1-dependent 'Lys-27'-linked polyubiquitination of IKBKG. Consequently, polyubiquitinated IKBKG undergoes proteasome-dependent degradation, which perturbs NF-kappa-B activation during bacterial infection. Mediates polyubiquitination of host U2AF1, leading to its proteasomal degradation. Catalyzes 'Lys-48'-linked polyubiquitination and subsequent degradation of a subset of host guanylate-binding proteins (GBP1, GBP2, GBP4 and GBP6), thereby suppressing host cell defense. In contrast, host GBP3 and GBP7 are not ubiquitinated by IpaH9.8. Uses UBE2D2 (UBCH5B) as an E2 ubiquitin-conjugating enzyme. This is E3 ubiquitin-protein ligase ipaH9.8 (ipaH9.8) from Shigella flexneri serotype X (strain 2002017).